A 314-amino-acid chain; its full sequence is Synaptophysin (314 aa).

Residues 1–25 (MLLLADMDVVNQLVAGGQFRVVKEP) are Cytoplasmic-facing. The MARVEL domain occupies 21-228 (VVKEPLGFVK…NLWFVFKETG (208 aa)). The chain crosses the membrane as a helical span at residues 26–49 (LGFVKVLQWVFAIFAFATCGSYTG). Over 50 to 107 (ELRLSVECANKTESALNIEVEFEYPFRLHQVYFDAPSCVKGGTTKIFLVGDYSSSAEF) the chain is Vesicular. Residue Asn59 is glycosylated (N-linked (GlcNAc...) asparagine). Tyr81 bears the Phosphotyrosine mark. A helical transmembrane segment spans residues 108 to 131 (FVTVAVFAFLYSMGALATYIFLQN). Over 132 to 138 (KYRENNK) the chain is Cytoplasmic. A helical transmembrane segment spans residues 139–162 (GPMMDFLATAVFAFMWLVSSSAWA). Over 163 to 200 (KGLSDVKMATDPENIIKEMPMCRQTGNTCKELRDPVTS) the chain is Vesicular. The helical transmembrane segment at 201 to 224 (GLNTSVVFGFLNLVLWVGNLWFVF) threads the bilayer. Over 225 to 314 (KETGWAAPFM…GAPTSFSNQM (90 aa)) the chain is Cytoplasmic. Thr227 carries the phosphothreonine modification. The segment at 239–314 (GAPEKQPAPG…GAPTSFSNQM (76 aa)) is disordered. Residues 254 to 264 (AGYGQGPGGYG) show a composition bias toward gly residues. The repeats, Gly-rich stretch occupies residues 255–305 (GYGQGPGGYGPQDSYGPQGGYQPDYGQPASGGGGGYGPQGDYGQQGYGQQG). Positions 265-282 (PQDSYGPQGGYQPDYGQP) are enriched in low complexity. Residues Tyr279 and Tyr296 each carry the phosphotyrosine modification. Residues 283–303 (ASGGGGGYGPQGDYGQQGYGQ) show a composition bias toward gly residues.

Belongs to the synaptophysin/synaptobrevin family. In terms of assembly, homohexamer or homotetramer. Interacts with SRCIN1. Interacts with VAMP2; the interaction is inhibited by interaction of VAPM2 with SEPT8. Post-translationally, ubiquitinated; mediated by SIAH1 or SIAH2 and leading to its subsequent proteasomal degradation. In terms of processing, phosphorylated by SRC.

It localises to the cytoplasmic vesicle. It is found in the secretory vesicle. Its subcellular location is the synaptic vesicle membrane. The protein localises to the synapse. The protein resides in the synaptosome. Functionally, possibly involved in structural functions as organizing other membrane components or in targeting the vesicles to the plasma membrane. Involved in the regulation of short-term and long-term synaptic plasticity. The protein is Synaptophysin (Syp) of Mus musculus (Mouse).